The primary structure comprises 30 residues: GLPVCGETCFGGTCNTPGCSCETWPVCSRN.

The segment at residues 1–30 (GLPVCGETCFGGTCNTPGCSCETWPVCSRN) is a cross-link (cyclopeptide (Gly-Asn)). 3 disulfide bridges follow: Cys-5/Cys-19, Cys-9/Cys-21, and Cys-14/Cys-27.

In terms of processing, this is a cyclic peptide.

In terms of biological role, probably participates in a plant defense mechanism. The protein is Varv peptide H of Viola arvensis (European field pansy).